A 257-amino-acid polypeptide reads, in one-letter code: MPYLYRIAYDGTLFYGFTGHPNSLEPKLRAALGEILGRGSRTDPGVSAVANVVMTSQRLHLGYVNSKLPRGVWAWGVAEVPEGFNPRRAKARRYLYVAPHWGEDVEAMREAAAVLVGTHDYSSFIKRRGDKATPTVTTVYKIEVEQRGGLIYMMFVGRGFRNKMIRKMAWAILATGRGVLKASDLRELVERPRPGAVPSAPAEGLVLLDIDYGIEFEVYHTALREAYTYFLRKYRAVEAHAAALKAAGEALARLDVV.

D43 (nucleophile) is an active-site residue. Residue Y94 participates in substrate binding.

The protein belongs to the tRNA pseudouridine synthase TruA family.

The catalysed reaction is uridine(38/39/40) in tRNA = pseudouridine(38/39/40) in tRNA. Formation of pseudouridine at positions 38, 39 and 40 in the anticodon stem and loop of transfer RNAs. In Pyrobaculum arsenaticum (strain DSM 13514 / JCM 11321 / PZ6), this protein is tRNA pseudouridine synthase A.